Reading from the N-terminus, the 221-residue chain is DNA replication complex GINS protein SLD5 (221 aa).

The protein belongs to the GINS4/SLD5 family. In terms of assembly, component of the GINS complex which is a heterotetramer of gins1/psf1, gins2/psf2, gins3/psf3 and gins4/sld5. Component of the CMG helicase complex, composed of the mcm2-7 complex, the GINS complex and cdc45.

The protein resides in the nucleus. It is found in the chromosome. It localises to the cytoplasm. Required for initiation of chromosomal DNA replication. Core component of CDC45-MCM-GINS (CMG) helicase, the molecular machine that unwinds template DNA during replication, and around which the replisome is built. The chain is DNA replication complex GINS protein SLD5 from Xenopus laevis (African clawed frog).